A 430-amino-acid polypeptide reads, in one-letter code: Adenylosuccinate synthetase (430 aa).

GTP is bound by residues 12-18 (GDEGKGK) and 40-42 (GHT). Aspartate 13 functions as the Proton acceptor in the catalytic mechanism. 2 residues coordinate Mg(2+): aspartate 13 and glycine 40. IMP contacts are provided by residues 13–16 (DEGK), 38–41 (NAGH), threonine 128, arginine 142, glutamine 223, threonine 238, and arginine 302. Catalysis depends on histidine 41, which acts as the Proton donor. A substrate-binding site is contributed by 298-304 (TTTGRPR). Residues arginine 304, 330–332 (LLD), and 412–414 (SVG) contribute to the GTP site.

This sequence belongs to the adenylosuccinate synthetase family. In terms of assembly, homodimer. The cofactor is Mg(2+).

It is found in the cytoplasm. It catalyses the reaction IMP + L-aspartate + GTP = N(6)-(1,2-dicarboxyethyl)-AMP + GDP + phosphate + 2 H(+). The protein operates within purine metabolism; AMP biosynthesis via de novo pathway; AMP from IMP: step 1/2. In terms of biological role, plays an important role in the de novo pathway of purine nucleotide biosynthesis. Catalyzes the first committed step in the biosynthesis of AMP from IMP. In Listeria monocytogenes serotype 4b (strain CLIP80459), this protein is Adenylosuccinate synthetase.